The sequence spans 357 residues: S-adenosylmethionine:tRNA ribosyltransferase-isomerase (357 aa).

The protein belongs to the QueA family. In terms of assembly, monomer.

It localises to the cytoplasm. It carries out the reaction 7-aminomethyl-7-carbaguanosine(34) in tRNA + S-adenosyl-L-methionine = epoxyqueuosine(34) in tRNA + adenine + L-methionine + 2 H(+). It participates in tRNA modification; tRNA-queuosine biosynthesis. Its function is as follows. Transfers and isomerizes the ribose moiety from AdoMet to the 7-aminomethyl group of 7-deazaguanine (preQ1-tRNA) to give epoxyqueuosine (oQ-tRNA). The sequence is that of S-adenosylmethionine:tRNA ribosyltransferase-isomerase from Hamiltonella defensa subsp. Acyrthosiphon pisum (strain 5AT).